The primary structure comprises 470 residues: Tryptophan synthase beta chain 1, chloroplastic (470 aa).

The span at 1 to 10 shows a compositional bias: polar residues; sequence MAASGTSATF. Residues 1–24 form a disordered region; sequence MAASGTSATFRASVSSAPSSSSQL. The span at 12–22 shows a compositional bias: low complexity; that stretch reads ASVSSAPSSSS. An N6-(pyridoxal phosphate)lysine modification is found at Lys165.

This sequence belongs to the TrpB family. As to quaternary structure, tetramer of two alpha and two beta chains. The cofactor is pyridoxal 5'-phosphate.

The protein resides in the plastid. It localises to the chloroplast. It carries out the reaction (1S,2R)-1-C-(indol-3-yl)glycerol 3-phosphate + L-serine = D-glyceraldehyde 3-phosphate + L-tryptophan + H2O. Its pathway is amino-acid biosynthesis; L-tryptophan biosynthesis; L-tryptophan from chorismate: step 5/5. In terms of biological role, the beta subunit is responsible for the synthesis of L-tryptophan from indole and L-serine. This is Tryptophan synthase beta chain 1, chloroplastic (TSB1) from Arabidopsis thaliana (Mouse-ear cress).